The primary structure comprises 448 residues: Phosphoglucosamine mutase (448 aa).

Residue S104 is the Phosphoserine intermediate of the active site. Mg(2+)-binding residues include S104, D243, D245, and D247. S104 is subject to Phosphoserine.

It belongs to the phosphohexose mutase family. Mg(2+) serves as cofactor. Activated by phosphorylation.

The enzyme catalyses alpha-D-glucosamine 1-phosphate = D-glucosamine 6-phosphate. Catalyzes the conversion of glucosamine-6-phosphate to glucosamine-1-phosphate. The protein is Phosphoglucosamine mutase of Xylella fastidiosa (strain 9a5c).